The chain runs to 276 residues: NH(3)-dependent NAD(+) synthetase (276 aa).

43–50 (GISGGVDS) lines the ATP pocket. Asp49 contacts Mg(2+). Arg146 contacts deamido-NAD(+). Thr166 contributes to the ATP binding site. Residue Glu171 coordinates Mg(2+). Positions 179 and 186 each coordinate deamido-NAD(+). ATP contacts are provided by Lys195 and Thr217. 266–267 (HK) contributes to the deamido-NAD(+) binding site.

This sequence belongs to the NAD synthetase family. As to quaternary structure, homodimer.

The enzyme catalyses deamido-NAD(+) + NH4(+) + ATP = AMP + diphosphate + NAD(+) + H(+). The protein operates within cofactor biosynthesis; NAD(+) biosynthesis; NAD(+) from deamido-NAD(+) (ammonia route): step 1/1. Catalyzes the ATP-dependent amidation of deamido-NAD to form NAD. Uses ammonia as a nitrogen source. The protein is NH(3)-dependent NAD(+) synthetase of Shewanella sediminis (strain HAW-EB3).